A 215-amino-acid polypeptide reads, in one-letter code: Pyrrolidone-carboxylate peptidase (215 aa).

Residues Glu81, Cys144, and His168 contribute to the active site.

This sequence belongs to the peptidase C15 family. In terms of assembly, homotetramer.

It localises to the cytoplasm. It carries out the reaction Release of an N-terminal pyroglutamyl group from a polypeptide, the second amino acid generally not being Pro.. Removes 5-oxoproline from various penultimate amino acid residues except L-proline. The protein is Pyrrolidone-carboxylate peptidase of Bacillus velezensis (strain DSM 23117 / BGSC 10A6 / LMG 26770 / FZB42) (Bacillus amyloliquefaciens subsp. plantarum).